A 126-amino-acid chain; its full sequence is Small ribosomal subunit protein uS13c (126 aa).

Positions 100–126 (GQRTRTNARTRRGARQTVAGKKKAPSK) are disordered. Residues 101-126 (QRTRTNARTRRGARQTVAGKKKAPSK) are compositionally biased toward basic residues.

This sequence belongs to the universal ribosomal protein uS13 family. As to quaternary structure, part of the 30S ribosomal subunit.

It is found in the plastid. Its subcellular location is the cyanelle. Functionally, located at the top of the head of the 30S subunit, it contacts several helices of the 16S rRNA. This chain is Small ribosomal subunit protein uS13c, found in Cyanophora paradoxa.